The sequence spans 310 residues: tRNA dimethylallyltransferase (310 aa).

14–21 (GPTASGKS) contributes to the ATP binding site. Residue 16 to 21 (TASGKS) coordinates substrate. Interaction with substrate tRNA stretches follow at residues 39 to 42 (DSMQ) and 163 to 167 (QRIVR).

It belongs to the IPP transferase family. In terms of assembly, monomer. Mg(2+) is required as a cofactor.

The catalysed reaction is adenosine(37) in tRNA + dimethylallyl diphosphate = N(6)-dimethylallyladenosine(37) in tRNA + diphosphate. Its function is as follows. Catalyzes the transfer of a dimethylallyl group onto the adenine at position 37 in tRNAs that read codons beginning with uridine, leading to the formation of N6-(dimethylallyl)adenosine (i(6)A). The protein is tRNA dimethylallyltransferase of Brucella melitensis biotype 2 (strain ATCC 23457).